Reading from the N-terminus, the 249-residue chain is Hydroxyacylglutathione hydrolase (249 aa).

Positions 54, 56, 58, 59, 113, 138, and 176 each coordinate Zn(2+).

It belongs to the metallo-beta-lactamase superfamily. Glyoxalase II family. In terms of assembly, monomer. Requires Zn(2+) as cofactor.

The enzyme catalyses an S-(2-hydroxyacyl)glutathione + H2O = a 2-hydroxy carboxylate + glutathione + H(+). It functions in the pathway secondary metabolite metabolism; methylglyoxal degradation; (R)-lactate from methylglyoxal: step 2/2. Its function is as follows. Thiolesterase that catalyzes the hydrolysis of S-D-lactoyl-glutathione to form glutathione and D-lactic acid. The protein is Hydroxyacylglutathione hydrolase of Synechococcus sp. (strain CC9605).